We begin with the raw amino-acid sequence, 285 residues long: Inhibitor of growth protein 5 (285 aa).

Residues glutamate 116–methionine 225 form a disordered region. Residues lysine 131–serine 149 are compositionally biased toward basic residues. Residues asparagine 160–glycine 178 show a composition bias toward low complexity. The PHD-type zinc finger occupies proline 232–aspartate 281. Positions 235, 237, 248, 253, 259, 262, 275, and 278 each coordinate Zn(2+).

It belongs to the ING family. Component of the Enok complex composed of at least Br140, enok, Eaf6 and Ing5.

The protein resides in the nucleus. It localises to the chromosome. In terms of biological role, component of the Enok complex which has a histone H3 acetyltransferase activity. The chain is Inhibitor of growth protein 5 from Drosophila melanogaster (Fruit fly).